The chain runs to 254 residues: MRILVTNDDGIHAPGLETLQGIARELSDDVWVVAPEYDQSGVSHSLSLNDPLRLRQVSEKRFAVKGTPSDCVIMGVSHILKDHRPDLVLSGVNRGQNVAEDVTYSGTIAGAMEGTILGIRAIALSQAYGAGGRANLKWSCAAAHGAAVIRKILEIGIEPGILVNVNFPDCEPEEVQGVAVSAQGQRNQALLQIDARHDGRGNPYFWLAFAKARFEPGNGTDLKAIAENRIAVTPLRLDLTDEPELTRFAAAFRA.

Positions 8, 9, 40, and 93 each coordinate a divalent metal cation.

Belongs to the SurE nucleotidase family. Requires a divalent metal cation as cofactor.

It localises to the cytoplasm. It catalyses the reaction a ribonucleoside 5'-phosphate + H2O = a ribonucleoside + phosphate. In terms of biological role, nucleotidase that shows phosphatase activity on nucleoside 5'-monophosphates. This chain is 5'-nucleotidase SurE, found in Methylorubrum populi (strain ATCC BAA-705 / NCIMB 13946 / BJ001) (Methylobacterium populi).